The sequence spans 271 residues: 2,3,4,5-tetrahydropyridine-2,6-dicarboxylate N-succinyltransferase (271 aa).

Residues Arg103 and Asp140 each coordinate substrate.

It belongs to the transferase hexapeptide repeat family. In terms of assembly, homotrimer.

It is found in the cytoplasm. It catalyses the reaction (S)-2,3,4,5-tetrahydrodipicolinate + succinyl-CoA + H2O = (S)-2-succinylamino-6-oxoheptanedioate + CoA. It participates in amino-acid biosynthesis; L-lysine biosynthesis via DAP pathway; LL-2,6-diaminopimelate from (S)-tetrahydrodipicolinate (succinylase route): step 1/3. The chain is 2,3,4,5-tetrahydropyridine-2,6-dicarboxylate N-succinyltransferase from Methylococcus capsulatus (strain ATCC 33009 / NCIMB 11132 / Bath).